A 674-amino-acid polypeptide reads, in one-letter code: CLK4-associating serine/arginine rich protein (674 aa).

Phosphoserine is present on Ser101. Disordered regions lie at residues 171–232 (TVAE…GMAD) and 258–674 (EKAM…HYRH). The segment covering 182–214 (PEEEESAAEEESNSDEDEVIPDIDVEVDVDELN) has biased composition (acidic residues). Basic residues predominate over residues 265–283 (RRSRRQRREFREKRLRGRK). Phosphoserine occurs at positions 285 and 294. Residues 290–313 (ARRDSPTYDPYKRSPSESSSESRS) show a composition bias toward basic and acidic residues. Thr327 carries the post-translational modification Phosphothreonine. A phosphoserine mark is found at Ser331 and Ser335. Positions 356–365 (PPAPPQPGGP) are enriched in pro residues. The segment covering 378–399 (SSSSSSSSASRTSSSRSSSRSS) has biased composition (low complexity). 2 stretches are compositionally biased toward basic residues: residues 411–443 (SGRH…RRHS) and 481–492 (RGGRGLRHHSSS). 2 stretches are compositionally biased toward low complexity: residues 493 to 506 (RSRS…SRSR) and 514 to 532 (HSPS…SQSP). A Phosphoserine modification is found at Ser547. Thr573 bears the Phosphothreonine mark. A coiled-coil region spans residues 585–647 (ALNRQFKADK…ERQYSRQSRS (63 aa)). Composition is skewed to basic and acidic residues over residues 590–617 (FKAD…ELRA) and 625–641 (KERE…ERQY). Over residues 642–651 (SRQSRSPSPR) the composition is skewed to low complexity. The segment covering 659–674 (SRRRSRSRSRSPHYRH) has biased composition (basic residues).

This sequence belongs to the splicing factor SR family. Probably interacts with CLK4. Post-translationally, phosphorylated in vitro by CLK4.

It localises to the nucleus. Its function is as follows. Probably functions as an alternative splicing regulator. May regulate the mRNA splicing of genes such as CLK1. May act by regulating members of the CLK kinase family. In Homo sapiens (Human), this protein is CLK4-associating serine/arginine rich protein (CLASRP).